The primary structure comprises 270 residues: MSIPNEYIAKTEDVAEQVIKRGKNVLPTVARLCLIATFFEDGLRMYIQWNEQREYMDMSWGCGKFLATVFVLVNLLGQLGGCGMVMARFKVDIAVGLLFFIVVLQTVAYSILWDFQFLLRNFALIGALLLVLAEARIEGRSLFAGVPSMGENKPKNFMQLAGRILLAFMFITLIRFELSVWQVIQDIIGSILMVLVVLGYKTKLSALILVALLTILNLYHNAWWTIPSYKPLRDFLKYDFFQTLSVIGGLLMIVSLGPGGVSMDEHKKKW.

Transmembrane regions (helical) follow at residues 65 to 85 (FLAT…CGMV), 93 to 113 (IAVG…SILW), 115 to 135 (FQFL…LAEA), 178 to 198 (LSVW…LVVL), 206 to 226 (ALIL…WWTI), and 243 to 263 (TLSV…GVSM). The Di-lysine motif motif lies at 267-270 (KKKW).

This sequence belongs to the SURF4 family.

The protein localises to the endoplasmic reticulum membrane. Endoplasmic reticulum cargo receptor that mediates the export of lipoproteins by recruiting cargos into COPII vesicles to facilitate their secretion. This is Surfeit locus protein 4 homolog from Drosophila melanogaster (Fruit fly).